The sequence spans 201 residues: Large ribosomal subunit protein uL4 (201 aa).

The tract at residues 42–67 (GNSAQKTRSEVSGGGKKPWNQKGTGR) is disordered.

This sequence belongs to the universal ribosomal protein uL4 family. Part of the 50S ribosomal subunit.

One of the primary rRNA binding proteins, this protein initially binds near the 5'-end of the 23S rRNA. It is important during the early stages of 50S assembly. It makes multiple contacts with different domains of the 23S rRNA in the assembled 50S subunit and ribosome. In terms of biological role, forms part of the polypeptide exit tunnel. The polypeptide is Large ribosomal subunit protein uL4 (Legionella pneumophila (strain Lens)).